We begin with the raw amino-acid sequence, 340 residues long: Central glycolytic genes regulator (340 aa).

A DNA-binding region (H-T-H motif) is located at residues 37–56 (RRSLSASLGISERVLRGEVQ). Beta-D-fructose 1,6-bisphosphate is bound by residues 149 to 152 (GGTT), R175, Q185, 250 to 251 (RR), E269, and K310.

It belongs to the SorC transcriptional regulatory family. In terms of assembly, homotetramer. Binds primarily as a dimer to each half-site of the full-length operator, with much higher affinity for the right site. Then, both dimers interact, bridging the two-half sites of the operator region.

Stability and function are regulated by the effector molecule fructose-1,6-bisphosphate (FBP). In the presence of glucose, binding of FBP to the low-affinity sugar-binding site of CggR disrupts dimer/dimer bridging interactions and triggers a tetramer to dimer transition, which leaves two physically independent dimers on the target DNA and allows transcription of the downstream coding sequences by the RNA polymerase. In addition, FBP and several other phosphorylated compounds can bind to a high-affinity binding-site and protect CggR against aggregation and proteolysis. In terms of biological role, in the absence of glucose, represses the transcription of the gapA operon, which encodes five key glycolytic enzymes. Binds specifically to the cggR-gapA promoter region and blocks the progression of the RNA polymerase, leading to the arrest of the transcription. This Bacillus subtilis (strain 168) protein is Central glycolytic genes regulator (cggR).